A 124-amino-acid chain; its full sequence is Ribonuclease pancreatic (124 aa).

Basic and acidic residues predominate over residues 1–13 (KESAAAKFERQHM). The segment at 1 to 24 (KESAAAKFERQHMDPSTSSASSSN) is disordered. Lys-7 and Arg-10 together coordinate substrate. His-12 functions as the Proton acceptor in the catalytic mechanism. Cystine bridges form between Cys-26–Cys-84, Cys-40–Cys-95, Cys-58–Cys-110, and Cys-65–Cys-72. Residues 41 to 45 (KPVNT), Lys-66, and Arg-85 contribute to the substrate site. His-119 (proton donor) is an active-site residue.

This sequence belongs to the pancreatic ribonuclease family. As to quaternary structure, monomer. Interacts with and forms tight 1:1 complexes with RNH1. Dimerization of two such complexes may occur. Interaction with RNH1 inhibits this protein. As to expression, pancreas.

The protein resides in the secreted. It catalyses the reaction an [RNA] containing cytidine + H2O = an [RNA]-3'-cytidine-3'-phosphate + a 5'-hydroxy-ribonucleotide-3'-[RNA].. It carries out the reaction an [RNA] containing uridine + H2O = an [RNA]-3'-uridine-3'-phosphate + a 5'-hydroxy-ribonucleotide-3'-[RNA].. Its function is as follows. Endonuclease that catalyzes the cleavage of RNA on the 3' side of pyrimidine nucleotides. Acts on single-stranded and double-stranded RNA. The sequence is that of Ribonuclease pancreatic (RNASE1) from Cervus elaphus (Red deer).